Here is a 173-residue protein sequence, read N- to C-terminus: Regulator of ribonuclease activity A (173 aa).

This sequence belongs to the RraA family. Homotrimer. Binds to both RNA-binding sites in the C-terminal region of Rne and to RhlB.

It is found in the cytoplasm. In terms of biological role, globally modulates RNA abundance by binding to RNase E (Rne) and regulating its endonucleolytic activity. Can modulate Rne action in a substrate-dependent manner by altering the composition of the degradosome. Modulates RNA-binding and helicase activities of the degradosome. The polypeptide is Regulator of ribonuclease activity A (Vibrio vulnificus (strain YJ016)).